We begin with the raw amino-acid sequence, 295 residues long: Mycothiol acetyltransferase (295 aa).

Position 30 (E30) interacts with 1D-myo-inositol 2-(L-cysteinylamino)-2-deoxy-alpha-D-glucopyranoside. An acetyl-CoA-binding site is contributed by 62 to 64; the sequence is LVV. The N-acetyltransferase domain occupies 137-295; that stretch reads VTVRAFRADS…DDDTHVQYRR (159 aa). Residues E165, K209, and E227 each contribute to the 1D-myo-inositol 2-(L-cysteinylamino)-2-deoxy-alpha-D-glucopyranoside site. Residues 231–233 and 238–244 contribute to the acetyl-CoA site; these read VGI and QGRGLGK. Position 265 (Y265) interacts with 1D-myo-inositol 2-(L-cysteinylamino)-2-deoxy-alpha-D-glucopyranoside.

It belongs to the acetyltransferase family. MshD subfamily. Monomer.

The enzyme catalyses 1D-myo-inositol 2-(L-cysteinylamino)-2-deoxy-alpha-D-glucopyranoside + acetyl-CoA = mycothiol + CoA + H(+). Functionally, catalyzes the transfer of acetyl from acetyl-CoA to desacetylmycothiol (Cys-GlcN-Ins) to form mycothiol. The chain is Mycothiol acetyltransferase from Nocardioides sp. (strain ATCC BAA-499 / JS614).